A 157-amino-acid polypeptide reads, in one-letter code: Ribonuclease H (157 aa).

Positions 5-146 (IMKQVEIFTD…CDDLARTAAE (142 aa)) constitute an RNase H type-1 domain. The Mg(2+) site is built by Asp-14, Glu-52, Asp-74, and Asp-138.

It belongs to the RNase H family. In terms of assembly, monomer. The cofactor is Mg(2+).

It is found in the cytoplasm. It catalyses the reaction Endonucleolytic cleavage to 5'-phosphomonoester.. Functionally, endonuclease that specifically degrades the RNA of RNA-DNA hybrids. The protein is Ribonuclease H of Aliivibrio salmonicida (strain LFI1238) (Vibrio salmonicida (strain LFI1238)).